The sequence spans 287 residues: Nucleotide-binding protein HD_0584 (287 aa).

Position 8–15 (8–15 (GRSGSGKS)) interacts with ATP. 56 to 59 (DIRN) is a GTP binding site.

The protein belongs to the RapZ-like family.

Displays ATPase and GTPase activities. This is Nucleotide-binding protein HD_0584 from Haemophilus ducreyi (strain 35000HP / ATCC 700724).